The primary structure comprises 444 residues: Protein giant-lens (444 aa).

An N-terminal signal peptide occupies residues 1-24; that stretch reads MPTTLMLLPCMLLLLLTAAAVAVG. Two-fingered domain 1 part repeat units follow at residues 123-165 and 285-307; these read RDVR…CRCP and CPSS…YKMC. Cystine bridges form between C141–C162, C147–C285, C164–C307, C316–C341, C343–C370, C378–C405, C384–C413, and C407–C440. 2 Two-fingered domain repeats span residues 316-370 and 378-444; these read CTHF…LFAC and CQRK…MAND. N333 carries an N-linked (GlcNAc...) asparagine glycan.

As to quaternary structure, interacts with spi. During embryogenesis, expression is in a segmental pattern in the ectoderm and in the nervous system. In the eye imaginal disks, expression in photoreceptor cells begins a few rows posterior to the morphogenetic furrow. Also expressed in the wing disk. In the adult, expression is seen in the retina and lamina.

It is found in the secreted. Its function is as follows. Regulates cell determination; development of ommatidia and optic lobe. Is a signaling molecule involved in the process of axon pathfinding in the eye. Part of the Ras pathway regulating programmed cell death in pupal eyes; activated by lozenge (lz). Antagonist for the Egfr receptor (gurken). Inhibits Egfr signaling without interacting directly with the receptor, but instead by sequestering the Egfr-activating ligand spitz (spi). This is Protein giant-lens (aos) from Drosophila melanogaster (Fruit fly).